The chain runs to 409 residues: Tetracenomycin polyketide synthase ketoacyl synthase beta subunit (409 aa).

Positions 4-407 constitute a Ketosynthase family 3 (KS3) domain; that stretch reads PAPVVVTGLG…GFNSALVVRR (404 aa).

The protein belongs to the thiolase-like superfamily. Beta-ketoacyl-ACP synthases family. In terms of assembly, the tetracenomycin polyketide synthase (TCM PKS) is composed of a ketosynthase complex (TcmKL), an acyl carrier protein (TcmM), a cyclase (TcmN) and a probable second cyclase (TcmJ). TcmK and TcmL form a heterodimeric complex.

The enzyme catalyses 10 malonyl-CoA + 8 H(+) = tetracenomycin F2 + 10 CO2 + 10 CoA + 2 H2O. The protein operates within antibiotic biosynthesis; tetracenomycin C biosynthesis. Its function is as follows. Involved in the biosynthesis of tetracenomycin C (TCM C). Part of a type II polyketide synthase (PKS) that catalyzes the synthesis of tetracenomycin F2 (TCM F2), a precursor of TCM C, from malonyl-CoA. TcmK and TcmL form a heterodimeric alpha-beta complex that catalyzes the condensation reactions between the growing acyl-enzyme chain and the malonyl-CoA extender units. In Streptomyces glaucescens, this protein is Tetracenomycin polyketide synthase ketoacyl synthase beta subunit.